The chain runs to 205 residues: Small ribosomal subunit protein uS4 (205 aa).

Basic and acidic residues predominate over residues methionine 1–glycine 16. Residues methionine 1–serine 46 are disordered. Positions serine 94 to valine 157 constitute an S4 RNA-binding domain.

It belongs to the universal ribosomal protein uS4 family. In terms of assembly, part of the 30S ribosomal subunit. Contacts protein S5. The interaction surface between S4 and S5 is involved in control of translational fidelity.

In terms of biological role, one of the primary rRNA binding proteins, it binds directly to 16S rRNA where it nucleates assembly of the body of the 30S subunit. Functionally, with S5 and S12 plays an important role in translational accuracy. This Rhizobium meliloti (strain 1021) (Ensifer meliloti) protein is Small ribosomal subunit protein uS4.